The primary structure comprises 478 residues: Proline--tRNA ligase (478 aa).

This sequence belongs to the class-II aminoacyl-tRNA synthetase family. ProS type 3 subfamily. In terms of assembly, homodimer.

Its subcellular location is the cytoplasm. The enzyme catalyses tRNA(Pro) + L-proline + ATP = L-prolyl-tRNA(Pro) + AMP + diphosphate. In terms of biological role, catalyzes the attachment of proline to tRNA(Pro) in a two-step reaction: proline is first activated by ATP to form Pro-AMP and then transferred to the acceptor end of tRNA(Pro). This chain is Proline--tRNA ligase, found in Clostridium botulinum (strain Loch Maree / Type A3).